The primary structure comprises 235 residues: Large ribosomal subunit protein uL1 (235 aa).

Residues 1-22 (MSKNSKAYRAAAEKVDRSNPYT) form a disordered region.

Belongs to the universal ribosomal protein uL1 family. Part of the 50S ribosomal subunit.

Its function is as follows. Binds directly to 23S rRNA. The L1 stalk is quite mobile in the ribosome, and is involved in E site tRNA release. Protein L1 is also a translational repressor protein, it controls the translation of the L11 operon by binding to its mRNA. The chain is Large ribosomal subunit protein uL1 from Mycobacterium ulcerans (strain Agy99).